We begin with the raw amino-acid sequence, 78 residues long: UPF0335 protein RBE_1185 (78 aa).

This sequence belongs to the UPF0335 family.

In Rickettsia bellii (strain RML369-C), this protein is UPF0335 protein RBE_1185.